The primary structure comprises 174 residues: Trypsin inhibitor (174 aa).

Intrachain disulfides connect cysteine 40/cysteine 86 and cysteine 131/cysteine 140.

Belongs to the protease inhibitor I3 (leguminous Kunitz-type inhibitor) family. As to quaternary structure, heterodimer of an alpha and a beta chain linked by a disulfide bond.

Inhibits trypsin and chymotrypsin with a 1:1 stoichiometry, with dissociation constants of 1.56 nM and 120 nM respectively. Inhibits plasma kallikrein, factor XIIa and plasmin with dissociation constants of 5.0 nM, 150 nM and 18 nM respectively. Does not inhibit factor Xa, thrombin, tissue kallikrein or cysteine proteinases such as papain and bromelain. The protein is Trypsin inhibitor of Enterolobium contortisiliquum (Pacara earpod tree).